The following is a 309-amino-acid chain: Taste receptor type 2 member 8 (309 aa).

Residues 1 to 7 (MFSPADN) are Extracellular-facing. Residues 8–28 (IFIILITGEFILGILGNGYIA) form a helical membrane-spanning segment. Residues 29–50 (LVNWIDWIKKKKISTIDYILTN) are Cytoplasmic-facing. Residues 51–71 (LVISRICLISVMVVNGIVIAV) form a helical membrane-spanning segment. The Extracellular segment spans residues 72–82 (YPDVYTKSKLQ). Residues 83–103 (IAICTFWTFANYLNMWITTCL) form a helical membrane-spanning segment. Topologically, residues 104-131 (NVFYFLKIANSSHPLFLWLKQKIDMVVR) are cytoplasmic. The chain crosses the membrane as a helical span at residues 132–152 (WILLGCFAISLLVSLIAAIVL). The Extracellular segment spans residues 153 to 184 (SYDYRFHAIAKHKRNITEMFHVSKRPYFEPLT). N-linked (GlcNAc...) asparagine glycosylation is present at N167. Residues 185 to 205 (LFNLFAIVPFIVSLISFFLLV) traverse the membrane as a helical segment. The Cytoplasmic segment spans residues 206-239 (RSLWRHTKQIKLYATGGRDPSTEVHVRAIKTMTS). Residues 240–260 (FIFLFFLYYISSILVTFSYLM) form a helical membrane-spanning segment. Residues 261–266 (TKYKLA) are Extracellular-facing. The chain crosses the membrane as a helical span at residues 267–287 (VEFGEIVAILYPLGHSLILIV). Over 288–309 (LNNKLRQTFVRMLTCRKIACVI) the chain is Cytoplasmic.

Belongs to the G-protein coupled receptor T2R family.

The protein localises to the membrane. In terms of biological role, receptor that may play a role in the perception of bitterness and is gustducin-linked. May play a role in sensing the chemical composition of the gastrointestinal content. The activity of this receptor may stimulate alpha gustducin, mediate PLC-beta-2 activation and lead to the gating of TRPM5. This Gorilla gorilla gorilla (Western lowland gorilla) protein is Taste receptor type 2 member 8 (TAS2R8).